The following is a 202-amino-acid chain: 3-isopropylmalate dehydratase small subunit (202 aa).

It belongs to the LeuD family. LeuD type 1 subfamily. As to quaternary structure, heterodimer of LeuC and LeuD.

It carries out the reaction (2R,3S)-3-isopropylmalate = (2S)-2-isopropylmalate. Its pathway is amino-acid biosynthesis; L-leucine biosynthesis; L-leucine from 3-methyl-2-oxobutanoate: step 2/4. Functionally, catalyzes the isomerization between 2-isopropylmalate and 3-isopropylmalate, via the formation of 2-isopropylmaleate. The chain is 3-isopropylmalate dehydratase small subunit from Rhizobium etli (strain ATCC 51251 / DSM 11541 / JCM 21823 / NBRC 15573 / CFN 42).